Here is a 77-residue protein sequence, read N- to C-terminus: Conotoxin Vc1 (77 aa).

A signal peptide spans 1 to 22 (MRTSGRLLLLCLAVGLLLESQA). 2 consecutive propeptides follow at residues 23–58 (HPNA…KGQR) and 73–77 (RRSFY).

Belongs to the conotoxin H superfamily. In terms of tissue distribution, expressed by the venom duct.

Its subcellular location is the secreted. Its function is as follows. Probable toxin. The sequence is that of Conotoxin Vc1 from Conus victoriae (Queen Victoria cone).